A 90-amino-acid polypeptide reads, in one-letter code: DNA-directed RNA polymerase subunit omega (90 aa).

Belongs to the RNA polymerase subunit omega family. The RNAP catalytic core consists of 2 alpha, 1 beta, 1 beta' and 1 omega subunit. When a sigma factor is associated with the core the holoenzyme is formed, which can initiate transcription.

It carries out the reaction RNA(n) + a ribonucleoside 5'-triphosphate = RNA(n+1) + diphosphate. In terms of biological role, promotes RNA polymerase assembly. Latches the N- and C-terminal regions of the beta' subunit thereby facilitating its interaction with the beta and alpha subunits. The chain is DNA-directed RNA polymerase subunit omega from Histophilus somni (strain 129Pt) (Haemophilus somnus).